The following is a 238-amino-acid chain: Thymidine kinase a (238 aa).

Residues G38 to S45, D70 to R72, and D115 to Q118 contribute to the ATP site. E116 functions as the Proton acceptor in the catalytic mechanism. Y147 is a substrate binding site. Residues C172 and C175 each coordinate Zn(2+). Residues T191 to G195 and Y200 contribute to the substrate site. Position 204 (C204) interacts with Zn(2+).

This sequence belongs to the thymidine kinase family. As to quaternary structure, monomer and dimer. Dimerization is stimulated by ATP. Expressed ubiquitously.

It localises to the cytoplasm. The enzyme catalyses thymidine + ATP = dTMP + ADP + H(+). It participates in purine metabolism. It functions in the pathway pyrimidine metabolism. Part of the salvage pathway for purine and pyrimidine deoxyribonucleotide synthesis. Phosphorylates preferentially purines over pyrimidines. Mediates tolerance to genotoxins, such as ultraviolet-C (UV-C) irradiation, MMC, a DNA crosslinker, and ZEO, a DNA intercalator, that induce double-strand breaks and thus contributes to several DNA repair pathways by providing deoxythymidine triphosphate that serve as precursors for DNA repair and to balance deoxyribonucleotides pools. The sequence is that of Thymidine kinase a from Arabidopsis thaliana (Mouse-ear cress).